The following is a 291-amino-acid chain: uncharacterized protein (291 aa).

Residues 77–140 (TVPQSSPTAI…PPTPVVEKSP (64 aa)) are disordered. The span at 125–134 (PVTPAHPPTP) shows a compositional bias: pro residues.

This is an uncharacterized protein from Synechocystis sp. (strain ATCC 27184 / PCC 6803 / Kazusa).